The chain runs to 349 residues: MSNSLVISVDAMGGDDAPDMVVDGVKLARKRFPDVRFLLFGDEARIGPLVAGDSALSAVCTIRHTASAVSGDAKPSQAVRSGRQSSLWLSIEAVKKGEAAGVVSAGNTGAFMAMAKLILRTLPGIDRPAIATLLPTLRGESVVLDLGANAECNANNLVEFAIMGEVFARTVLSLDRPTVGIMNIGSESGKGTDTVRDASARLQDSALPIRFMGFVEGDDLGKGTVDVIVTDGFTGNVMLKTAEGTAKLYSQFLRNAFLSSLLARLGYLLSRSALQKVKARTDPRRYNGAMFLGLDGVAVKSHGGTDALGFSNALAVAIDLVRQGFNESIKDEIAKVQVLPSTVSVSHAV.

The protein belongs to the PlsX family. Homodimer. Probably interacts with PlsY.

The protein resides in the cytoplasm. The catalysed reaction is a fatty acyl-[ACP] + phosphate = an acyl phosphate + holo-[ACP]. The protein operates within lipid metabolism; phospholipid metabolism. Functionally, catalyzes the reversible formation of acyl-phosphate (acyl-PO(4)) from acyl-[acyl-carrier-protein] (acyl-ACP). This enzyme utilizes acyl-ACP as fatty acyl donor, but not acyl-CoA. This chain is Phosphate acyltransferase, found in Rhodospirillum rubrum (strain ATCC 11170 / ATH 1.1.1 / DSM 467 / LMG 4362 / NCIMB 8255 / S1).